The sequence spans 705 residues: Fatty acid oxidation complex subunit alpha (705 aa).

The enoyl-CoA hydratase stretch occupies residues 1–188; sequence MGKTFNLTRR…KMGLVNDVVP (188 aa). The 3-hydroxyacyl-CoA dehydrogenase stretch occupies residues 308 to 705; it reads RKVKKAVILG…AMAAEKARFF (398 aa).

The protein in the N-terminal section; belongs to the enoyl-CoA hydratase/isomerase family. In the central section; belongs to the 3-hydroxyacyl-CoA dehydrogenase family. In terms of assembly, heterotetramer of two alpha chains (FadJ) and two beta chains (FadI).

The protein resides in the cytoplasm. It carries out the reaction a (3S)-3-hydroxyacyl-CoA = a (2E)-enoyl-CoA + H2O. It catalyses the reaction a 4-saturated-(3S)-3-hydroxyacyl-CoA = a (3E)-enoyl-CoA + H2O. The catalysed reaction is a (3S)-3-hydroxyacyl-CoA + NAD(+) = a 3-oxoacyl-CoA + NADH + H(+). The enzyme catalyses (3S)-3-hydroxybutanoyl-CoA = (3R)-3-hydroxybutanoyl-CoA. The protein operates within lipid metabolism; fatty acid beta-oxidation. Its function is as follows. Catalyzes the formation of a hydroxyacyl-CoA by addition of water on enoyl-CoA. Also exhibits 3-hydroxyacyl-CoA epimerase and 3-hydroxyacyl-CoA dehydrogenase activities. The protein is Fatty acid oxidation complex subunit alpha of Shewanella oneidensis (strain ATCC 700550 / JCM 31522 / CIP 106686 / LMG 19005 / NCIMB 14063 / MR-1).